A 388-amino-acid chain; its full sequence is Chorismate synthase (388 aa).

Residues R39 and R45 each contribute to the NADP(+) site. Positions 95 to 118 are disordered; the sequence is EKNEKSRRVSRPRPGHADLVGGMK. FMN contacts are provided by residues 130–132, 251–252, G296, 311–315, and R337; these read RSS, NA, and KPIPT.

This sequence belongs to the chorismate synthase family. In terms of assembly, homotetramer. Requires FMNH2 as cofactor.

It catalyses the reaction 5-O-(1-carboxyvinyl)-3-phosphoshikimate = chorismate + phosphate. The protein operates within metabolic intermediate biosynthesis; chorismate biosynthesis; chorismate from D-erythrose 4-phosphate and phosphoenolpyruvate: step 7/7. In terms of biological role, catalyzes the anti-1,4-elimination of the C-3 phosphate and the C-6 proR hydrogen from 5-enolpyruvylshikimate-3-phosphate (EPSP) to yield chorismate, which is the branch point compound that serves as the starting substrate for the three terminal pathways of aromatic amino acid biosynthesis. This reaction introduces a second double bond into the aromatic ring system. The polypeptide is Chorismate synthase (Listeria welshimeri serovar 6b (strain ATCC 35897 / DSM 20650 / CCUG 15529 / CIP 8149 / NCTC 11857 / SLCC 5334 / V8)).